The primary structure comprises 144 residues: MNHKVLLINGPNLNLLGRREPSVYGHQTLADIVATLSEQAQAAGVELEHIQSNAEFELINAIHATDAQMIIINPAAFTHTSVALRDALLGVDIPFFEVHLSNVHAREPFRHHSYLSDKAIGVICGFGAQGYEFALAAAIKRLKA.

Tyrosine 24 (proton acceptor) is an active-site residue. Substrate is bound by residues asparagine 73, histidine 79, and aspartate 86. Histidine 99 acts as the Proton donor in catalysis. Substrate contacts are provided by residues 100–101 (LS) and arginine 110.

It belongs to the type-II 3-dehydroquinase family. Homododecamer.

The enzyme catalyses 3-dehydroquinate = 3-dehydroshikimate + H2O. It functions in the pathway metabolic intermediate biosynthesis; chorismate biosynthesis; chorismate from D-erythrose 4-phosphate and phosphoenolpyruvate: step 3/7. Its function is as follows. Catalyzes a trans-dehydration via an enolate intermediate. The sequence is that of 3-dehydroquinate dehydratase from Shewanella sp. (strain MR-4).